Reading from the N-terminus, the 142-residue chain is UPF0102 protein Bcen2424_0290 (142 aa).

Residues 1-19 (MCHAAPARPEGARGRPPSG) show a composition bias toward low complexity. Positions 1–27 (MCHAAPARPEGARGRPPSGDNFSGAAR) are disordered.

It belongs to the UPF0102 family.

This is UPF0102 protein Bcen2424_0290 from Burkholderia cenocepacia (strain HI2424).